A 537-amino-acid chain; its full sequence is Hexosyltransferase GAUT11 (537 aa).

At 1–16 (MRRWPVDHRRRGRRRL) the chain is on the cytoplasmic side. The helical; Signal-anchor for type II membrane protein transmembrane segment at 17–37 (SSWIWFLLGSFSVAGLVLFIV) threads the bilayer. At 38–537 (QHYHHQQDPS…HPYLQDCVTA (500 aa)) the chain is on the lumenal side. Asn66, Asn247, Asn299, Asn403, Asn436, and Asn525 each carry an N-linked (GlcNAc...) asparagine glycan.

Belongs to the glycosyltransferase 8 family. Monomer. Expressed in roots, inflorescences, siliques, seeds, leaves and stems.

It localises to the golgi apparatus membrane. It catalyses the reaction [(1-&gt;4)-alpha-D-galacturonosyl](n) + UDP-alpha-D-galacturonate = [(1-&gt;4)-alpha-D-galacturonosyl](n+1) + UDP + H(+). The protein operates within glycan metabolism; pectin biosynthesis. Functionally, glycosyltransferase involved in pectin and/or xylans biosynthesis in cell walls. Required for the biosynthesis of pectin in seed coat epidermal (SCE) cells. Collaboratively with MUCI70, essential for the accumulation of seed mucilage, a gelatinous wall rich in unbranched rhamnogalacturonan I (RG I), and for shaping the surface morphology of seeds. Catalyzes homogalacturonan (HG) elongation by acting as an HG alpha-1,4 galacturonic acid transferase. This Arabidopsis thaliana (Mouse-ear cress) protein is Hexosyltransferase GAUT11.